The primary structure comprises 26 residues: Mu-theraphotoxin-Phlo2a (26 aa).

Cystine bridges form between Cys-2/Cys-16, Cys-9/Cys-21, and Cys-15/Cys-25.

Belongs to the neurotoxin 30 (phrixotoxin) family. In terms of tissue distribution, expressed by the venom gland.

The protein localises to the secreted. Its function is as follows. Gating-modifier toxin that non-selectively inhibits voltage-gated sodium channel Nav by shifting the threshold for channel activation to more positive potentials. This toxin moderately inhibits human Nav1.2/SCN2A (IC(50)=404 nM), Nav1.5/SCN5A (IC(50)=218 nM) and Nav1.7/SCN9A (IC(50)=333 nM). Inhibition of Nav1.7 is voltage-dependent, with lower inhibition at more positive test pulses. The chain is Mu-theraphotoxin-Phlo2a from Phlogius sp. (Tarantula spider).